The following is a 237-amino-acid chain: Uridylate kinase (237 aa).

Residue 10 to 13 coordinates ATP; it reads KFSG. Residues 18–23 form an involved in allosteric activation by GTP region; that stretch reads GDSGFG. Gly-52 serves as a coordination point for UMP. 2 residues coordinate ATP: Gly-53 and Arg-57. Residues Asp-73 and 134 to 141 contribute to the UMP site; that span reads TGNPFFTT. ATP-binding residues include Thr-161, Tyr-167, and Asp-170.

This sequence belongs to the UMP kinase family. In terms of assembly, homohexamer.

It localises to the cytoplasm. The enzyme catalyses UMP + ATP = UDP + ADP. It participates in pyrimidine metabolism; CTP biosynthesis via de novo pathway; UDP from UMP (UMPK route): step 1/1. Its activity is regulated as follows. Allosterically activated by GTP. Inhibited by UTP. Its function is as follows. Catalyzes the reversible phosphorylation of UMP to UDP. This chain is Uridylate kinase, found in Campylobacter hominis (strain ATCC BAA-381 / DSM 21671 / CCUG 45161 / LMG 19568 / NCTC 13146 / CH001A).